Consider the following 69-residue polypeptide: DNA-directed RNA polymerase subunit epsilon (69 aa).

The protein belongs to the RNA polymerase subunit epsilon family. As to quaternary structure, monomer. RNAP is composed of a core of 2 alpha, a beta and a beta' subunit. The core is associated with a delta subunit, and at least one of epsilon or omega. When a sigma factor is associated with the core the holoenzyme is formed, which can initiate transcription.

It localises to the cytoplasm. Its subcellular location is the nucleoid. The catalysed reaction is RNA(n) + a ribonucleoside 5'-triphosphate = RNA(n+1) + diphosphate. In terms of biological role, a non-essential component of RNA polymerase (RNAP). Has a similar structure to bacteriophage T7 protein Gp2 (AC P03704), which is known to bind to RNAP in the DNA binding-cleft. Unlike Gp2 however, this protein does not inhibit transcription initiation. In vitro reconstitution experiments show this subunit is dispensible. The protein is DNA-directed RNA polymerase subunit epsilon of Bacillus subtilis (strain 168).